Consider the following 126-residue polypeptide: Histone H2B type F-S (126 aa).

The segment covering 1-12 (MPEPAKSAPAPK) has biased composition (low complexity). A disordered region spans residues 1–36 (MPEPAKSAPAPKKGSKKAVTKAQKKDGRKRKRSRKE). At Pro-2 the chain carries N-acetylproline. Residue Glu-3 is modified to ADP-ribosyl glutamic acid. Lys-6 bears the N6-(2-hydroxyisobutyryl)lysine; alternate mark. Position 6 is an N6-(beta-hydroxybutyryl)lysine; alternate (Lys-6). The residue at position 6 (Lys-6) is an N6-acetyllysine; alternate. Lys-6 carries the post-translational modification N6-butyryllysine; alternate. The residue at position 6 (Lys-6) is an N6-crotonyllysine; alternate. Lys-6 carries the N6-lactoyllysine; alternate modification. A Glycyl lysine isopeptide (Lys-Gly) (interchain with G-Cter in SUMO2); alternate cross-link involves residue Lys-6. The residue at position 7 (Ser-7) is an ADP-ribosylserine. Lys-12 carries the post-translational modification N6-(beta-hydroxybutyryl)lysine; alternate. Lys-12 and Lys-13 each carry N6-acetyllysine; alternate. N6-crotonyllysine; alternate occurs at positions 12 and 13. An N6-lactoyllysine; alternate modification is found at Lys-12. Lys-13 bears the N6-(2-hydroxyisobutyryl)lysine; alternate mark. Ser-15 is subject to Phosphoserine; by STK4/MST1. N6-acetyllysine; alternate is present on residues Lys-16, Lys-17, Lys-21, and Lys-24. 4 positions are modified to N6-crotonyllysine; alternate: Lys-16, Lys-17, Lys-21, and Lys-24. Lys-16, Lys-17, Lys-21, and Lys-24 each carry N6-lactoyllysine; alternate. Lys-17 and Lys-21 each carry N6-(beta-hydroxybutyryl)lysine; alternate. Lys-17 is subject to N6-glutaryllysine; alternate. Lys-21 and Lys-24 each carry N6-(2-hydroxyisobutyryl)lysine; alternate. Position 21 is an N6-butyryllysine; alternate (Lys-21). Residue Lys-21 forms a Glycyl lysine isopeptide (Lys-Gly) (interchain with G-Cter in SUMO2); alternate linkage. At Lys-25 the chain carries N6-(2-hydroxyisobutyryl)lysine. An N6-(2-hydroxyisobutyryl)lysine; alternate modification is found at Lys-35. Lys-35 is subject to N6-(beta-hydroxybutyryl)lysine; alternate. Lys-35 is subject to N6-crotonyllysine; alternate. An N6-glutaryllysine; alternate modification is found at Lys-35. Lys-35 carries the N6-succinyllysine; alternate modification. Lys-35 is covalently cross-linked (Glycyl lysine isopeptide (Lys-Gly) (interchain with G-Cter in ubiquitin); alternate). Glu-36 is subject to PolyADP-ribosyl glutamic acid. Ser-37 carries the post-translational modification Phosphoserine; by AMPK. Lys-44, Lys-47, and Lys-58 each carry N6-(2-hydroxyisobutyryl)lysine; alternate. An N6-lactoyllysine; alternate modification is found at Lys-44. Lys-44 and Lys-47 each carry N6-glutaryllysine; alternate. Lys-47 bears the N6-methyllysine; alternate mark. Lys-58 is modified (N6,N6-dimethyllysine; alternate). Arg-80 is subject to Dimethylated arginine. An N6-(2-hydroxyisobutyryl)lysine; alternate modification is found at Lys-86. Lys-86 carries the N6-(beta-hydroxybutyryl)lysine; alternate modification. Lys-86 is subject to N6-acetyllysine; alternate. Residue Lys-86 is modified to N6-lactoyllysine; alternate. Lys-86 carries the post-translational modification N6,N6,N6-trimethyllysine; alternate. 2 positions are modified to omega-N-methylarginine: Arg-87 and Arg-93. Residue Lys-109 is modified to N6-(2-hydroxyisobutyryl)lysine; alternate. Position 109 is an N6-lactoyllysine; alternate (Lys-109). N6-glutaryllysine; alternate is present on Lys-109. Lys-109 carries the post-translational modification N6-methyllysine; alternate. A glycan (O-linked (GlcNAc) serine) is linked at Ser-113. Position 116 is a phosphothreonine (Thr-116). An N6-(2-hydroxyisobutyryl)lysine; alternate mark is found at Lys-117 and Lys-121. Residues Lys-117 and Lys-121 each carry the N6-(beta-hydroxybutyryl)lysine; alternate modification. N6-lactoyllysine; alternate is present on residues Lys-117 and Lys-121. Residues Lys-117 and Lys-121 each carry the N6-glutaryllysine; alternate modification. Residues Lys-117 and Lys-121 each carry the N6-succinyllysine; alternate modification. N6-malonyllysine; alternate is present on Lys-117. Lys-117 carries the post-translational modification N6-methylated lysine; alternate. Lys-121 is covalently cross-linked (Glycyl lysine isopeptide (Lys-Gly) (interchain with G-Cter in ubiquitin); alternate).

This sequence belongs to the histone H2B family. In terms of assembly, the nucleosome is a histone octamer containing two molecules each of H2A, H2B, H3 and H4 assembled in one H3-H4 heterotetramer and two H2A-H2B heterodimers. The octamer wraps approximately 147 bp of DNA. In terms of processing, monoubiquitination at Lys-35 (H2BK34Ub) by the MSL1/MSL2 dimer is required for histone H3 'Lys-4' (H3K4me) and 'Lys-79' (H3K79me) methylation and transcription activation at specific gene loci, such as HOXA9 and MEIS1 loci. Similarly, monoubiquitination at Lys-121 (H2BK120Ub) by the RNF20/40 complex gives a specific tag for epigenetic transcriptional activation and is also prerequisite for histone H3 'Lys-4' and 'Lys-79' methylation. It also functions cooperatively with the FACT dimer to stimulate elongation by RNA polymerase II. H2BK120Ub also acts as a regulator of mRNA splicing: deubiquitination by USP49 is required for efficient cotranscriptional splicing of a large set of exons. Post-translationally, phosphorylation at Ser-37 (H2BS36ph) by AMPK in response to stress promotes transcription. Phosphorylated on Ser-15 (H2BS14ph) by STK4/MST1 during apoptosis; which facilitates apoptotic chromatin condensation. Also phosphorylated on Ser-15 in response to DNA double strand breaks (DSBs), and in correlation with somatic hypermutation and immunoglobulin class-switch recombination. GlcNAcylation at Ser-113 promotes monoubiquitination of Lys-121. It fluctuates in response to extracellular glucose, and associates with transcribed genes. In terms of processing, ADP-ribosylated by PARP1 or PARP2 on Ser-7 (H2BS6ADPr) in response to DNA damage. H2BS6ADPr promotes recruitment of CHD1L. Mono-ADP-ribosylated on Glu-3 (H2BE2ADPr) by PARP3 in response to single-strand breaks. Poly ADP-ribosylation on Glu-36 (H2BE35ADPr) by PARP1 regulates adipogenesis: it inhibits phosphorylation at Ser-37 (H2BS36ph), thereby blocking expression of pro-adipogenetic genes. Post-translationally, crotonylation (Kcr) is specifically present in male germ cells and marks testis-specific genes in post-meiotic cells, including X-linked genes that escape sex chromosome inactivation in haploid cells. Crotonylation marks active promoters and enhancers and confers resistance to transcriptional repressors. It is also associated with post-meiotically activated genes on autosomes. Lactylated in macrophages by EP300/P300 by using lactoyl-CoA directly derived from endogenous or exogenous lactate, leading to stimulates gene transcription.

The protein localises to the nucleus. It is found in the chromosome. Functionally, core component of nucleosome. Nucleosomes wrap and compact DNA into chromatin, limiting DNA accessibility to the cellular machineries which require DNA as a template. Histones thereby play a central role in transcription regulation, DNA repair, DNA replication and chromosomal stability. DNA accessibility is regulated via a complex set of post-translational modifications of histones, also called histone code, and nucleosome remodeling. Has broad antibacterial activity. May contribute to the formation of the functional antimicrobial barrier of the colonic epithelium, and to the bactericidal activity of amniotic fluid. This Homo sapiens (Human) protein is Histone H2B type F-S.